We begin with the raw amino-acid sequence, 296 residues long: Fructose-bisphosphate aldolase class 1 (296 aa).

E175 (proton acceptor) is an active-site residue. The active-site Schiff-base intermediate with dihydroxyacetone-P is K212.

This sequence belongs to the class I fructose-bisphosphate aldolase family.

The enzyme catalyses beta-D-fructose 1,6-bisphosphate = D-glyceraldehyde 3-phosphate + dihydroxyacetone phosphate. The protein operates within carbohydrate degradation; glycolysis; D-glyceraldehyde 3-phosphate and glycerone phosphate from D-glucose: step 4/4. The sequence is that of Fructose-bisphosphate aldolase class 1 from Staphylococcus aureus (strain MSSA476).